Here is a 533-residue protein sequence, read N- to C-terminus: CTP synthase (533 aa).

The amidoligase domain stretch occupies residues 1–264 (MKYIFVTGGV…GKLVTEKLNL (264 aa)). Residue S12 coordinates CTP. S12 is a binding site for UTP. ATP is bound by residues 13–18 (SLGKGI) and D70. 2 residues coordinate Mg(2+): D70 and E138. CTP contacts are provided by residues 145–147 (DIE), 185–190 (KTKPTQ), and K221. Residues 185 to 190 (KTKPTQ) and K221 contribute to the UTP site. Residue 237 to 239 (KDA) participates in ATP binding. The Glutamine amidotransferase type-1 domain maps to 289-533 (TIGIVGKYIE…HGLVKASIEK (245 aa)). G357 contacts L-glutamine. C384 acts as the Nucleophile; for glutamine hydrolysis in catalysis. Residues 385–388 (LGMQ), E407, and R464 contribute to the L-glutamine site. Catalysis depends on residues H509 and E511.

This sequence belongs to the CTP synthase family. As to quaternary structure, homotetramer.

It catalyses the reaction UTP + L-glutamine + ATP + H2O = CTP + L-glutamate + ADP + phosphate + 2 H(+). The catalysed reaction is L-glutamine + H2O = L-glutamate + NH4(+). The enzyme catalyses UTP + NH4(+) + ATP = CTP + ADP + phosphate + 2 H(+). The protein operates within pyrimidine metabolism; CTP biosynthesis via de novo pathway; CTP from UDP: step 2/2. With respect to regulation, allosterically activated by GTP, when glutamine is the substrate; GTP has no effect on the reaction when ammonia is the substrate. The allosteric effector GTP functions by stabilizing the protein conformation that binds the tetrahedral intermediate(s) formed during glutamine hydrolysis. Inhibited by the product CTP, via allosteric rather than competitive inhibition. Functionally, catalyzes the ATP-dependent amination of UTP to CTP with either L-glutamine or ammonia as the source of nitrogen. Regulates intracellular CTP levels through interactions with the four ribonucleotide triphosphates. The protein is CTP synthase of Methanococcus maripaludis (strain DSM 14266 / JCM 13030 / NBRC 101832 / S2 / LL).